Here is a 353-residue protein sequence, read N- to C-terminus: Nicotinate-nucleotide--dimethylbenzimidazole phosphoribosyltransferase (353 aa).

Glu318 acts as the Proton acceptor in catalysis.

The protein belongs to the CobT family.

It catalyses the reaction 5,6-dimethylbenzimidazole + nicotinate beta-D-ribonucleotide = alpha-ribazole 5'-phosphate + nicotinate + H(+). Its pathway is nucleoside biosynthesis; alpha-ribazole biosynthesis; alpha-ribazole from 5,6-dimethylbenzimidazole: step 1/2. In terms of biological role, catalyzes the synthesis of alpha-ribazole-5'-phosphate from nicotinate mononucleotide (NAMN) and 5,6-dimethylbenzimidazole (DMB). This is Nicotinate-nucleotide--dimethylbenzimidazole phosphoribosyltransferase from Roseiflexus sp. (strain RS-1).